Reading from the N-terminus, the 238-residue chain is Probable transcriptional regulatory protein YeeN (238 aa).

Belongs to the TACO1 family. YeeN subfamily.

The protein localises to the cytoplasm. This chain is Probable transcriptional regulatory protein YeeN, found in Salmonella typhi.